Reading from the N-terminus, the 440-residue chain is Ribosomal protein uS12 methylthiotransferase RimO (440 aa).

An MTTase N-terminal domain is found at 1-117; sequence MKIFFISLGC…ITEVIDKVLG (117 aa). Residues cysteine 10, cysteine 46, cysteine 80, cysteine 154, cysteine 158, and cysteine 161 each contribute to the [4Fe-4S] cluster site. Residues 140 to 370 form the Radical SAM core domain; that stretch reads TTGGYYSFLK…MEIQQGIAFE (231 aa). The 68-residue stretch at 373–440 folds into the TRAM domain; it reads ESMVGRKLKV…KEYDLIGTAE (68 aa).

It belongs to the methylthiotransferase family. RimO subfamily. It depends on [4Fe-4S] cluster as a cofactor.

The protein localises to the cytoplasm. The enzyme catalyses L-aspartate(89)-[ribosomal protein uS12]-hydrogen + (sulfur carrier)-SH + AH2 + 2 S-adenosyl-L-methionine = 3-methylsulfanyl-L-aspartate(89)-[ribosomal protein uS12]-hydrogen + (sulfur carrier)-H + 5'-deoxyadenosine + L-methionine + A + S-adenosyl-L-homocysteine + 2 H(+). Its function is as follows. Catalyzes the methylthiolation of an aspartic acid residue of ribosomal protein uS12. The chain is Ribosomal protein uS12 methylthiotransferase RimO from Lachnoclostridium phytofermentans (strain ATCC 700394 / DSM 18823 / ISDg) (Clostridium phytofermentans).